The primary structure comprises 240 residues: MGVEWLVEKLQEHDITLNDKQKQQFQTYYELLVEWNEKMNLTSITDEEGVYLKHFYDSITAAFYIDMNQELSICDVGAGAGFPSIPLKIVFPQLKVTIVDSLNKRIQFLNHLADALDLRGVSVVHERAENFGNVRGDNRESYDIVTARAVARLSVLSELCLPLVKTGGHFIAMKSSKGEEELEEARFGIGVFGGRVEAVETFELPGDAGERQMIIIEKRSKTPKKYPRKAGTPNKSPLLK.

S-adenosyl-L-methionine contacts are provided by residues Gly-77, Phe-82, 128 to 129 (AE), and Arg-148. Residues 217–240 (EKRSKTPKKYPRKAGTPNKSPLLK) form a disordered region.

It belongs to the methyltransferase superfamily. RNA methyltransferase RsmG family.

It localises to the cytoplasm. In terms of biological role, specifically methylates the N7 position of guanine in position 535 of 16S rRNA. The polypeptide is Ribosomal RNA small subunit methyltransferase G (Staphylococcus carnosus (strain TM300)).